A 628-amino-acid chain; its full sequence is Pinene synthase, chloroplastic (628 aa).

A chloroplast-targeting transit peptide spans 1 to 36 (MALVSTAPLASKSCLHKSLISSTHELKALSRTIPAL). Residues Asp-379, Asp-383, and Asp-531 each contribute to the Mg(2+) site. Positions 379-383 (DDMYD) match the DDXXD motif motif.

Belongs to the terpene synthase family. Tpsd subfamily. Mg(2+) is required as a cofactor. Requires Mn(2+) as cofactor. K(+) serves as cofactor.

The protein resides in the plastid. The protein localises to the chloroplast. The catalysed reaction is (2E)-geranyl diphosphate = (1S,5S)-alpha-pinene + diphosphate. It carries out the reaction (2E)-geranyl diphosphate = (1S,5S)-beta-pinene + diphosphate. The protein operates within terpene metabolism; oleoresin biosynthesis. Involved in defensive oleoresin formation in conifers in response to insect attack or other injury. Involved in monoterpene (C10) olefins biosynthesis. A mixture of alpha- and beta-pinene is produced by this enzyme. The sequence is that of Pinene synthase, chloroplastic (ag3) from Abies grandis (Grand fir).